We begin with the raw amino-acid sequence, 134 residues long: L-ectoine synthase (134 aa).

This sequence belongs to the ectoine synthase family.

The catalysed reaction is (2S)-4-acetamido-2-aminobutanoate = L-ectoine + H2O. Its pathway is amine and polyamine biosynthesis; ectoine biosynthesis; L-ectoine from L-aspartate 4-semialdehyde: step 3/3. In terms of biological role, catalyzes the circularization of gamma-N-acetyl-alpha,gamma-diaminobutyric acid (ADABA) to ectoine (1,4,5,6-tetrahydro-2-methyl-4-pyrimidine carboxylic acid), which is an excellent osmoprotectant. The chain is L-ectoine synthase from Thermobifida fusca (strain YX).